A 1368-amino-acid chain; its full sequence is DNA-directed RNA polymerase subunit beta (1368 aa).

The protein belongs to the RNA polymerase beta chain family. As to quaternary structure, the RNAP catalytic core consists of 2 alpha, 1 beta, 1 beta' and 1 omega subunit. When a sigma factor is associated with the core the holoenzyme is formed, which can initiate transcription.

It carries out the reaction RNA(n) + a ribonucleoside 5'-triphosphate = RNA(n+1) + diphosphate. DNA-dependent RNA polymerase catalyzes the transcription of DNA into RNA using the four ribonucleoside triphosphates as substrates. The sequence is that of DNA-directed RNA polymerase subunit beta from Ralstonia pickettii (strain 12J).